The following is a 299-amino-acid chain: Peroxisomal biogenesis factor 19 (299 aa).

The interval 1–63 is disordered; that stretch reads MAAAEGDGGV…SPGDTAKDAL (63 aa). A2 carries the N-acetylalanine modification. Residues 2–56 are docking to the peroxisome membrane and binding to PEX3; that stretch reads AAAEGDGGVRAEADRELEELLESALDDFDKAKPSPAPPPTTTAPDASGPQKRSPG. Residues 2–91 form a necessary for PEX19 function on peroxisome biogenesis region; sequence AAAEGDGGVR…QATAEFEKAM (90 aa). A compositionally biased stretch (acidic residues) spans 16–27; sequence RELEELLESALD. Phosphoserine is present on residues S35, S54, and S66. T236 bears the Phosphothreonine mark. C296 carries the post-translational modification Cysteine methyl ester. A lipid anchor (S-farnesyl cysteine) is attached at C296. Residues 297–299 constitute a propeptide, removed in mature form; it reads LIM.

It belongs to the peroxin-19 family. In terms of assembly, interacts with a broad range of peroxisomal membrane proteins, including PEX3, PEX10, PEX11A, PEX11B, PEX12, PEX13, PEX14 and PEX16, PXMP2/PMP22, PXMP4/PMP24, SLC25A17/PMP34, ABCD1/ALDP, ABCD2/ALDRP, and ABCD3/PMP70. Also interacts with the tumor suppressor CDKN2A/p19ARF.

The protein resides in the cytoplasm. The protein localises to the peroxisome membrane. Its function is as follows. Necessary for early peroxisomal biogenesis. Acts both as a cytosolic chaperone and as an import receptor for peroxisomal membrane proteins (PMPs). Binds and stabilizes newly synthesized PMPs in the cytoplasm by interacting with their hydrophobic membrane-spanning domains, and targets them to the peroxisome membrane by binding to the integral membrane protein PEX3. Excludes CDKN2A from the nucleus and prevents its interaction with MDM2, which results in active degradation of TP53. This is Peroxisomal biogenesis factor 19 (PEX19) from Bos taurus (Bovine).